We begin with the raw amino-acid sequence, 745 residues long: Immunoglobulin superfamily containing leucine-rich repeat protein 2 (745 aa).

An N-terminal signal peptide occupies residues methionine 1–alanine 19. Residues cysteine 20–alanine 51 enclose the LRRNT domain. Residues cysteine 20–serine 589 lie on the Extracellular side of the membrane. 2 N-linked (GlcNAc...) asparagine glycosylation sites follow: asparagine 52 and asparagine 73. LRR repeat units follow at residues asparagine 52–asparagine 73, glutamine 76–valine 97, glutamine 100–serine 123, alanine 124–alanine 145, and aspartate 148–alanine 169. The N-linked (GlcNAc...) asparagine glycan is linked to asparagine 121. The region spanning asparagine 181–proline 232 is the LRRCT domain. One can recognise an Ig-like domain in the interval proline 233 to threonine 372. Cysteine 260 and cysteine 356 form a disulfide bridge. Residues lysine 290 to aspartate 300 show a composition bias toward basic and acidic residues. Residues lysine 290–proline 328 are disordered. A compositionally biased stretch (pro residues) spans threonine 317–proline 328. N-linked (GlcNAc...) asparagine glycans are attached at residues asparagine 338 and asparagine 365. The disordered stretch occupies residues alanine 376–leucine 423. N-linked (GlcNAc...) asparagine glycosylation is found at asparagine 474 and asparagine 563. Residues leucine 590–glycine 610 traverse the membrane as a helical segment. Over alanine 611–glycine 745 the chain is Cytoplasmic. Residues serine 654–alanine 697 form a disordered region. Acidic residues predominate over residues glycine 665 to glutamine 683. Tyrosine 719 carries the post-translational modification Phosphotyrosine. Position 720 is a phosphoserine (serine 720).

Homomultimer. Interacts with NTRK1/TrkA. As to expression, at 11.5 dpc, expressed in spinal nerves, their roots and the ventral spinal cord. At 12.5 dpc, detected in the ventral spinal cord, dorsal root ganglia (DRG), dorsal and ventral roots and sympathetic chain ganglia. At 12.5 dpc, expressed in almost all motor neurons which also express RET and in almost all DRG sensory neurons which also express NTRK1. At 18.5 dpc, expressed only in a subset of NTRK1-expressing neurons but still expressed in nearly all RET-expressing neurons.

Its subcellular location is the cell membrane. In terms of biological role, required for axon extension during neural development. This chain is Immunoglobulin superfamily containing leucine-rich repeat protein 2 (Islr2), found in Mus musculus (Mouse).